The following is a 394-amino-acid chain: Phosphopentomutase (394 aa).

Mn(2+) contacts are provided by Asp-13, Asp-286, His-291, Asp-327, His-328, and His-339.

It belongs to the phosphopentomutase family. Requires Mn(2+) as cofactor.

It localises to the cytoplasm. It catalyses the reaction 2-deoxy-alpha-D-ribose 1-phosphate = 2-deoxy-D-ribose 5-phosphate. It carries out the reaction alpha-D-ribose 1-phosphate = D-ribose 5-phosphate. The protein operates within carbohydrate degradation; 2-deoxy-D-ribose 1-phosphate degradation; D-glyceraldehyde 3-phosphate and acetaldehyde from 2-deoxy-alpha-D-ribose 1-phosphate: step 1/2. In terms of biological role, isomerase that catalyzes the conversion of deoxy-ribose 1-phosphate (dRib-1-P) and ribose 1-phosphate (Rib-1-P) to deoxy-ribose 5-phosphate (dRib-5-P) and ribose 5-phosphate (Rib-5-P), respectively. The polypeptide is Phosphopentomutase (Bacillus thuringiensis (strain Al Hakam)).